The primary structure comprises 263 residues: Oxygen-evolving enhancer protein 2, chloroplastic (263 aa).

Residues 1–78 (MAAASCFHAL…VGTKVSPADA (78 aa)) constitute a chloroplast transit peptide. Residues 14–30 (ARSSSSSLQSSSSRLPA) show a composition bias toward low complexity. The interval 14 to 34 (ARSSSSSLQSSSSRLPAPIKP) is disordered.

This sequence belongs to the PsbP family.

It is found in the plastid. Its subcellular location is the chloroplast thylakoid membrane. In terms of biological role, may be involved in the regulation of photosystem II. The protein is Oxygen-evolving enhancer protein 2, chloroplastic of Helianthus annuus (Common sunflower).